Here is a 1893-residue protein sequence, read N- to C-terminus: Plexin-A4 (1893 aa).

The N-terminal stretch at 1–23 (MKAMPWNWTCLLSHLLVVGMGSS) is a signal peptide. Positions 24–506 (TLLPRQPPQL…SERQLTRVPV (483 aa)) constitute a Sema domain. Topologically, residues 24-1236 (TLLPRQPPQL…IAPDSPLSLP (1213 aa)) are extracellular. Cystine bridges form between C94–C103, C129–C137, C283–C404, C299–C355, C373–C392, C509–C526, C515–C557, C518–C535, C529–C541, and C592–C611. The 51-residue stretch at 508-558 (SCGQYRSCGECLGSGDPHCGWCVLHNTCTRKERCERSREPRRFASEMKQCV) folds into the PSI 1 domain. N654 carries an N-linked (GlcNAc...) asparagine glycan. 2 consecutive PSI domains span residues 654 to 701 (NCSV…EDCP) and 802 to 855 (KCGA…SKCT). 4 consecutive IPT/TIG domains span residues 857-951 (PRIT…YYFM), 953-1036 (LTLA…FQYV), 1039-1138 (PTIV…FTYY), and 1141-1229 (PVFE…YIAP). 3 N-linked (GlcNAc...) asparagine glycosylation sites follow: N1006, N1131, and N1179. The chain crosses the membrane as a helical span at residues 1237 to 1257 (AIVSIAVAGGLLIIFIVAVLI). Topologically, residues 1258 to 1893 (AYKRKSRESD…QVITLMSLDS (636 aa)) are cytoplasmic. An N6-acetyllysine modification is found at K1349.

The protein belongs to the plexin family. Interacts with NRP1 and NRP2. Expressed in the developing nervous system. Widely expressed in both the central and peripheral nervous systems. Expressed in the peripheral ganglia, somatosensory, olfactory, visual, auditory and equilibrium systems.

Its subcellular location is the cell membrane. In terms of biological role, coreceptor for SEMA3A. Necessary for signaling by class 3 semaphorins and subsequent remodeling of the cytoskeleton. Plays a role in axon guidance in the developing nervous system. Class 3 semaphorins bind to a complex composed of a neuropilin and a plexin. The plexin modulates the affinity of the complex for specific semaphorins, and its cytoplasmic domain is required for the activation of down-stream signaling events in the cytoplasm. This is Plexin-A4 (Plxna4) from Mus musculus (Mouse).